We begin with the raw amino-acid sequence, 587 residues long: Kelch-like protein 3 (587 aa).

Position 10 is a phosphoserine (serine 10). The 68-residue stretch at 50–117 (CDVMIVAEDV…VYTAEIEVTE (68 aa)) folds into the BTB domain. The 103-residue stretch at 152–254 (CLGIRAFADV…PRDYLVQTVE (103 aa)) folds into the BACK domain. Threonine 295 carries the post-translational modification Phosphothreonine. Kelch repeat units follow at residues 302 to 347 (VMIV…FMAG), 348 to 394 (HVYA…VLND), 396 to 441 (LYAV…VVEG), 442 to 490 (KLYA…VLSG), 491 to 537 (QLYA…AVNG), and 539 to 585 (LYVV…VIHK). Threonine 375 is subject to Phosphothreonine. 2 positions are modified to phosphoserine: serine 376 and serine 433.

The protein belongs to the KLHL3 family. In terms of assembly, homodimer. Component of the BCR(KLHL3) E3 ubiquitin ligase complex, at least composed of CUL3 and KLHL3 and RBX1. Interacts with CLDN8. In terms of processing, phosphorylation at Ser-433 by PKA or PKC decreases the interaction with WNK1 and WNK4, leading to inhibit their degradation by the BCR(KLHL3) complex. Phosphorylated at Ser-433 by PKC in response to angiotensin II signaling, decreasing ability to promote degradation of WNK1 and WNK4, leading to activation of Na-Cl cotransporter SLC12A3/NCC. Phosphorylation at Ser-433 is increased by insulin. Dephosphorylated at Ser-433 by calcineurin PPP3CA, promoting degradation of WNK1 and WNK4.

The protein resides in the cytoplasm. Its subcellular location is the cytoskeleton. It localises to the cytosol. It functions in the pathway protein modification; protein ubiquitination. In terms of biological role, substrate-specific adapter of a BCR (BTB-CUL3-RBX1) E3 ubiquitin ligase complex that acts as a regulator of ion transport in the distal nephron. The BCR(KLHL3) complex acts by mediating ubiquitination and degradation of WNK1 and WNK4, two activators of Na-Cl cotransporter SLC12A3/NCC in distal convoluted tubule cells of kidney, thereby regulating NaCl reabsorption. The BCR(KLHL3) complex also mediates ubiquitination and degradation of WNK3. The BCR(KLHL3) complex also mediates ubiquitination of CLDN8, a tight-junction protein required for paracellular chloride transport in the kidney, leading to its degradation. This is Kelch-like protein 3 (KLHL3) from Pongo abelii (Sumatran orangutan).